The following is a 76-amino-acid chain: Small proline-rich protein 2E (76 aa).

3 repeat units span residues 21-29 (KKCPEPCPH), 30-38 (PQCPEPCPP), and 39-47 (PKCPEPCPE). A 3 X 9 AA approximate tandem repeats region spans residues 21–47 (KKCPEPCPHPQCPEPCPPPKCPEPCPE). The disordered stretch occupies residues 52-76 (PSYQQKCPPVQPPPPCQQKCPPKSK).

This sequence belongs to the cornifin (SPRR) family. In terms of tissue distribution, expressed in uterus.

Its subcellular location is the cytoplasm. Its function is as follows. Cross-linked envelope protein of keratinocytes. It is a keratinocyte protein that first appears in the cell cytosol, but ultimately becomes cross-linked to membrane proteins by transglutaminase. All that results in the formation of an insoluble envelope beneath the plasma membrane. The sequence is that of Small proline-rich protein 2E (Sprr2e) from Mus musculus (Mouse).